Here is a 62-residue protein sequence, read N- to C-terminus: uncharacterized protein (62 aa).

The protein resides in the mitochondrion. This is an uncharacterized protein from Marchantia polymorpha (Common liverwort).